Here is a 300-residue protein sequence, read N- to C-terminus: ESX-5 secretion-associated protein EspG5 (300 aa).

The protein belongs to the EspG family. As to quaternary structure, interacts specifically with ESX-5-dependent PE/PPE proteins. Binds PPE33 and PPE18. Does not interact with EsxN. Monomer in solution.

It is found in the cytoplasm. In terms of biological role, specific chaperone for cognate PE/PPE proteins. Plays an important role in preventing aggregation of PE/PPE dimers. Required for LipY and PE31/PPE18 secretion. The protein is ESX-5 secretion-associated protein EspG5 of Mycobacterium marinum (strain ATCC BAA-535 / M).